A 280-amino-acid chain; its full sequence is Putative pyruvate, phosphate dikinase regulatory protein (280 aa).

Position 152–159 (152–159) interacts with ADP; that stretch reads GISRTSKT.

The protein belongs to the pyruvate, phosphate/water dikinase regulatory protein family. PDRP subfamily.

It catalyses the reaction N(tele)-phospho-L-histidyl/L-threonyl-[pyruvate, phosphate dikinase] + ADP = N(tele)-phospho-L-histidyl/O-phospho-L-threonyl-[pyruvate, phosphate dikinase] + AMP + H(+). It carries out the reaction N(tele)-phospho-L-histidyl/O-phospho-L-threonyl-[pyruvate, phosphate dikinase] + phosphate + H(+) = N(tele)-phospho-L-histidyl/L-threonyl-[pyruvate, phosphate dikinase] + diphosphate. In terms of biological role, bifunctional serine/threonine kinase and phosphorylase involved in the regulation of the pyruvate, phosphate dikinase (PPDK) by catalyzing its phosphorylation/dephosphorylation. The polypeptide is Putative pyruvate, phosphate dikinase regulatory protein (Clostridioides difficile (strain 630) (Peptoclostridium difficile)).